The primary structure comprises 89 residues: Small ribosomal subunit protein uS14 (89 aa).

This sequence belongs to the universal ribosomal protein uS14 family. Part of the 30S ribosomal subunit. Contacts proteins S3 and S10.

In terms of biological role, binds 16S rRNA, required for the assembly of 30S particles and may also be responsible for determining the conformation of the 16S rRNA at the A site. The sequence is that of Small ribosomal subunit protein uS14 from Flavobacterium johnsoniae (strain ATCC 17061 / DSM 2064 / JCM 8514 / BCRC 14874 / CCUG 350202 / NBRC 14942 / NCIMB 11054 / UW101) (Cytophaga johnsonae).